Here is a 145-residue protein sequence, read N- to C-terminus: Synaptojanin-2-binding protein (145 aa).

At 1–117 (MNGRVDYLVT…GPQGEGEPSG (117 aa)) the chain is on the cytoplasmic side. The PDZ domain occupies 13 to 100 (EINLTRGPSG…AVSLRVQHRL (88 aa)). The helical; Anchor for type IV membrane protein transmembrane segment at 118–138 (IPIAMVLVPVFALTMVAAWAF) threads the bilayer. Topologically, residues 139–145 (MRYRQRL) are mitochondrial intermembrane.

As to quaternary structure, binds (via the PDZ domain) to isoform 2A of SYNJ2 (via the unique motif in the C-terminus). Interacts (via C-terminus) with RALBP1. Interacts (via PDZ domain) with ACVR2A (via C-terminus) and ACVR2B (via C-terminus). Forms a ternary complex with ACVR2A and RALBP1. Interacts with MAPK12. Interacts with DLL1; enhances DLL1 protein stability, and promotes notch signaling in endothelial cells.

The protein resides in the mitochondrion outer membrane. The protein localises to the cytoplasm. Its subcellular location is the perinuclear region. In terms of biological role, regulates endocytosis of activin type 2 receptor kinases through the Ral/RALBP1-dependent pathway and may be involved in suppression of activin-induced signal transduction. This chain is Synaptojanin-2-binding protein, found in Bos taurus (Bovine).